The chain runs to 60 residues: UPF0434 protein ETA_21370 (60 aa).

The protein belongs to the UPF0434 family.

The polypeptide is UPF0434 protein ETA_21370 (Erwinia tasmaniensis (strain DSM 17950 / CFBP 7177 / CIP 109463 / NCPPB 4357 / Et1/99)).